Here is a 332-residue protein sequence, read N- to C-terminus: Acetyl-coenzyme A carboxylase carboxyl transferase subunit beta (332 aa).

In terms of domain architecture, CoA carboxyltransferase N-terminal spans 24–293; that stretch reads LWIKCPDSGH…PEVIVESEPE (270 aa). The tract at residues 288 to 332 is disordered; that stretch reads VESEPEPEPEPVVAEIIPPTSDLPVSAPAPAPVAAQTPAPAAPSA. Over residues 298–332 the composition is skewed to low complexity; sequence PVVAEIIPPTSDLPVSAPAPAPVAAQTPAPAAPSA.

This sequence belongs to the AccD/PCCB family. In terms of assembly, acetyl-CoA carboxylase is a heterohexamer composed of biotin carboxyl carrier protein (AccB), biotin carboxylase (AccC) and two subunits each of ACCase subunit alpha (AccA) and ACCase subunit beta (AccD).

The protein localises to the cytoplasm. The enzyme catalyses N(6)-carboxybiotinyl-L-lysyl-[protein] + acetyl-CoA = N(6)-biotinyl-L-lysyl-[protein] + malonyl-CoA. It functions in the pathway lipid metabolism; malonyl-CoA biosynthesis; malonyl-CoA from acetyl-CoA: step 1/1. Its function is as follows. Component of the acetyl coenzyme A carboxylase (ACC) complex. Biotin carboxylase (BC) catalyzes the carboxylation of biotin on its carrier protein (BCCP) and then the CO(2) group is transferred by the transcarboxylase to acetyl-CoA to form malonyl-CoA. This is Acetyl-coenzyme A carboxylase carboxyl transferase subunit beta from Rhodopseudomonas palustris (strain BisB18).